A 158-amino-acid chain; its full sequence is Transcriptional repressor NrdR (158 aa).

Positions 1 to 22 are disordered; sequence MRCPYCGSEDTQVKDSRPAEDN. The segment at 3–34 is a zinc-finger region; that stretch reads CPYCGSEDTQVKDSRPAEDNTSIRRRRICPDC. Residues 11-22 are compositionally biased toward basic and acidic residues; the sequence is TQVKDSRPAEDN. The 91-residue stretch at 49-139 folds into the ATP-cone domain; it reads LMVIKKTGRK…VYRDFSHAED (91 aa).

Belongs to the NrdR family. Zn(2+) serves as cofactor.

In terms of biological role, negatively regulates transcription of bacterial ribonucleotide reductase nrd genes and operons by binding to NrdR-boxes. The protein is Transcriptional repressor NrdR of Rhizobium rhizogenes (strain K84 / ATCC BAA-868) (Agrobacterium radiobacter).